We begin with the raw amino-acid sequence, 120 residues long: LOB domain-containing protein 8 (120 aa).

One can recognise an LOB domain in the interval 8–109; sequence RPCCVCITKN…AYLHELEEKI (102 aa).

The protein belongs to the LOB domain-containing protein family.

This Arabidopsis thaliana (Mouse-ear cress) protein is LOB domain-containing protein 8 (LBD8).